The primary structure comprises 352 residues: Tropomodulin-3 (352 aa).

The residue at position 25 (Ser-25) is a Phosphoserine.

Belongs to the tropomodulin family. Binds to the N-terminus of tropomyosin and to actin. Interacts with FLII. In terms of tissue distribution, ubiquitous.

It localises to the cytoplasm. The protein localises to the cytoskeleton. Functionally, blocks the elongation and depolymerization of the actin filaments at the pointed end. The Tmod/TM complex contributes to the formation of the short actin protofilament, which in turn defines the geometry of the membrane skeleton. This chain is Tropomodulin-3 (Tmod3), found in Mus musculus (Mouse).